A 285-amino-acid polypeptide reads, in one-letter code: Phospholipid phosphatase 1 (285 aa).

The Cytoplasmic segment spans residues 1–6 (MFDKTR). The PDZ-binding; involved in localization to the apical cell membrane signature appears at 5–7 (TRL). Residues 7–27 (LPYVALDVLCVLLAGLPFAIL) form a helical membrane-spanning segment. The Extracellular portion of the chain corresponds to 28 to 53 (TSRHTPFQRGLFCNDESIKYPYKEDT). A helical membrane pass occupies residues 54-74 (IPYPLLGGIIIPFSIIVMIVG). Residues 75–94 (ETLSVYFNLLHSNSFIRNNY) lie on the Cytoplasmic side of the membrane. A helical transmembrane segment spans residues 95-115 (IATIYKAIGTFLFGAAASQSL). Over 116–164 (TDIAKYSIGRLRPHFLDVCDPDWSKINCSDGYIENYICRGNAQKVKEGR) the chain is Extracellular. Residues 120–128 (KYSIGRLRP) are phosphatase sequence motif I. Asn142 carries an N-linked (GlcNAc...) asparagine glycan. The helical transmembrane segment at 165-185 (LSFYSGHSSFSMYCMLFVALY) threads the bilayer. The phosphatase sequence motif II stretch occupies residues 168–171 (YSGH). Residue His171 is the Proton donors of the active site. Over 186 to 196 (LQARMKGDWAR) the chain is Cytoplasmic. A helical transmembrane segment spans residues 197–216 (LLRPTLQFGLVAVSIYVGLS). The phosphatase sequence motif III stretch occupies residues 216 to 227 (SRVSDYKHHWSD). Over 217-229 (RVSDYKHHWSDVL) the chain is Extracellular. His223 acts as the Nucleophile in catalysis. The chain crosses the membrane as a helical span at residues 230–250 (TGLIQGALVAIVVAVYVSDFF). Topologically, residues 251–285 (KERNSPFKERKEEDSHTTLHETPTTGNHYRNSHQP) are cytoplasmic. Positions 257–269 (FKERKEEDSHTTL) are enriched in basic and acidic residues. Residues 257 to 285 (FKERKEEDSHTTLHETPTTGNHYRNSHQP) are disordered. The segment covering 270–285 (HETPTTGNHYRNSHQP) has biased composition (polar residues).

Belongs to the PA-phosphatase related phosphoesterase family. As to quaternary structure, forms functional homodimers and homooligomers that are not required for substrate recognition and catalytic activity. Can also form heterooligomers with PLPP2 and PLPP3. In terms of processing, N-glycosylated. N-linked sugars are of the complex type. N-glycosylation is not required for the phosphatase activity.

The protein localises to the cell membrane. The protein resides in the apical cell membrane. It is found in the membrane raft. It localises to the membrane. Its subcellular location is the caveola. The enzyme catalyses a 1,2-diacyl-sn-glycero-3-phosphate + H2O = a 1,2-diacyl-sn-glycerol + phosphate. It catalyses the reaction 1,2-dihexadecanoyl-sn-glycero-3-phosphate + H2O = 1,2-dihexadecanoyl-sn-glycerol + phosphate. It carries out the reaction 1,2-di-(9Z-octadecenoyl)-sn-glycero-3-phosphate + H2O = 1,2-di-(9Z-octadecenoyl)-sn-glycerol + phosphate. The catalysed reaction is a monoacyl-sn-glycero-3-phosphate + H2O = a monoacylglycerol + phosphate. The enzyme catalyses (9Z)-octadecenoyl-sn-glycero-3-phosphate + H2O = (9Z-octadecenoyl)-glycerol + phosphate. It catalyses the reaction a 1-acyl-sn-glycero-3-phosphate + H2O = a 1-acyl-sn-glycerol + phosphate. It carries out the reaction 1-(9Z-octadecenoyl)-sn-glycero-3-phosphate + H2O = 1-(9Z-octadecenoyl)-sn-glycerol + phosphate. The catalysed reaction is a 1,2-diacyl-sn-glycerol 3-diphosphate + H2O = a 1,2-diacyl-sn-glycero-3-phosphate + phosphate + H(+). The enzyme catalyses sphing-4-enine 1-phosphate + H2O = sphing-4-enine + phosphate. It catalyses the reaction an N-acylsphing-4-enine 1-phosphate + H2O = an N-acylsphing-4-enine + phosphate. It carries out the reaction N-(octanoyl)-sphing-4-enine-1-phosphate + H2O = N-octanoylsphing-4-enine + phosphate. The catalysed reaction is N-(9Z-octadecenoyl)-ethanolamine phosphate + H2O = N-(9Z-octadecenoyl) ethanolamine + phosphate. The enzyme catalyses 1-hexadecanoyl-2-(9Z-octadecenoyl)-sn-glycero-3-phosphate + H2O = 1-hexadecanoyl-2-(9Z-octadecenoyl)-sn-glycerol + phosphate. It participates in lipid metabolism; phospholipid metabolism. With respect to regulation, magnesium-independent phospholipid phosphatase. Insensitive to N-ethylmaleimide. In terms of biological role, magnesium-independent phospholipid phosphatase of the plasma membrane that catalyzes the dephosphorylation of a variety of glycerolipid and sphingolipid phosphate esters including phosphatidate/PA, lysophosphatidate/LPA, diacylglycerol pyrophosphate/DGPP, sphingosine 1-phosphate/S1P and ceramide 1-phosphate/C1P. Also acts on N-oleoyl ethanolamine phosphate/N-(9Z-octadecenoyl)-ethanolamine phosphate, a potential physiological compound. Through its extracellular phosphatase activity allows both the hydrolysis and the cellular uptake of these bioactive lipid mediators from the milieu, regulating signal transduction in different cellular processes. It is for instance essential for the extracellular hydrolysis of S1P and subsequent conversion into intracellular S1P. Involved in the regulation of inflammation, platelets activation, cell proliferation and migration among other processes. May also have an intracellular activity to regulate phospholipid-mediated signaling pathways. This is Phospholipid phosphatase 1 from Sus scrofa (Pig).